Reading from the N-terminus, the 386-residue chain is 2-isopropylmalate synthase (386 aa).

The 254-residue stretch at 12 to 265 (VRIFDTTLRD…DVGVRTYLLY (254 aa)) folds into the Pyruvate carboxyltransferase domain. The a divalent metal cation site is built by aspartate 21, histidine 203, histidine 205, and asparagine 239.

This sequence belongs to the alpha-IPM synthase/homocitrate synthase family. In terms of assembly, homodimer. Requires a divalent metal cation as cofactor.

The catalysed reaction is 3-methyl-2-oxobutanoate + acetyl-CoA + H2O = (2S)-2-isopropylmalate + CoA + H(+). It functions in the pathway amino-acid biosynthesis; L-leucine biosynthesis; L-leucine from 3-methyl-2-oxobutanoate: step 1/4. Its activity is regulated as follows. Is not inhibited by leucine. Catalyzes the condensation of the acetyl group of acetyl-CoA with 3-methyl-2-oxobutanoate (2-oxoisovalerate) to form 3-carboxy-3-hydroxy-4-methylpentanoate (2-isopropylmalate). Carries out the first step of the leucine biosynthesis pathway. Also displays a low citramalate synthase activity, using pyruvate as substrate, but is unable to use 2-oxoglutarate. This is 2-isopropylmalate synthase from Sulfolobus acidocaldarius (strain ATCC 33909 / DSM 639 / JCM 8929 / NBRC 15157 / NCIMB 11770).